The sequence spans 1887 residues: DNA-directed RNA polymerase II subunit RPB1 (1887 aa).

Zn(2+)-binding residues include Cys-67, Cys-70, Cys-77, His-80, Cys-107, Cys-110, Cys-150, and Cys-176. Residues 156–178 (MDLTKENQQPDPNKKPGHGGCGH) are disordered. Mg(2+) contacts are provided by Asp-487, Asp-489, and Asp-491. The tract at residues 825-837 (PSEFYFHAMGGRE) is bridging helix. Lys-1260 is covalently cross-linked (Glycyl lysine isopeptide (Lys-Gly) (interchain with G-Cter in ubiquitin)). Disordered regions lie at residues 1528–1565 (TPGGPSFSPSAASDASGMSPSWSPAHPGSSPSSPGPSM) and 1579–1887 (YSPT…ESED). Low complexity-rich tracts occupy residues 1529 to 1565 (PGGPSFSPSAASDASGMSPSWSPAHPGSSPSSPGPSM), 1579 to 1610 (YSPTSPNYTASSPGGASPNYSPSSPNYSPTSP), and 1626 to 1650 (PQSTGYSPSSSGYSPTSPVYSPTVQ). Repeat 1 spans residues 1579–1585 (YSPTSPN). The segment at 1579–1881 (YSPTSPNYTA…SPAYSPSSPT (303 aa)) is C-terminal domain (CTD); 32 X 7 AA approximate tandem repeats of Y-[ST]-P-[STNVAPGN]-[STGMA]-[PSTR]-[SNAGCQKTLRIMH]. One copy of the 2; approximate repeat lies at 1586–1592 (YTASSPG). Repeat copies occupy residues 1598 to 1604 (YSPSSPN), 1605 to 1611 (YSPTSPL), 1631 to 1637 (YSPSSSG), and 1638 to 1644 (YSPTSPV). Over residues 1651–1664 (FQSSPSFAGSGSNI) the composition is skewed to polar residues. The span at 1665 to 1760 (YSPGNAYSPS…GVKYSPTSPT (96 aa)) shows a compositional bias: low complexity. Tandem repeats lie at residues 1671 to 1677 (YSPSSSN), 1678 to 1684 (YSPNSPS), 1685 to 1691 (YSPTSPS), 1692 to 1698 (YSPSSPS), 1699 to 1705 (YSPTSPC), 1706 to 1712 (YSPTSPS), 1713 to 1719 (YSPTSPN), 1720 to 1726 (YTPVTPS), 1727 to 1733 (YSPTSPN), 1740 to 1746 (YSPASPA), 1754 to 1760 (YSPTSPT), 1761 to 1767 (YSPPSPS), 1777 to 1783 (YTPGSPQ), 1784 to 1790 (YSPASPK), 1791 to 1797 (YSPTSPL), 1798 to 1804 (YSPSSPQ), and 1811 to 1817 (YSPTGST). Over residues 1776-1786 (QYTPGSPQYSP) the composition is skewed to polar residues. Residues 1788 to 1813 (SPKYSPTSPLYSPSSPQHSPSNQYSP) show a composition bias toward low complexity. Residues 1814–1831 (TGSTYSATSPRYSPNMSI) are compositionally biased toward polar residues. One copy of the 24; approximate repeat lies at 1818 to 1824 (YSATSPR). 8 consecutive repeat copies span residues 1825 to 1831 (YSPNMSI), 1832 to 1838 (YSPSSTK), 1839 to 1845 (YSPTSPT), 1846 to 1852 (YTPTARN), 1853 to 1859 (YSPTSPM), 1860 to 1866 (YSPTAPS), 1868 to 1874 (YSPTSPA), and 1875 to 1881 (YSPSSPT). The span at 1832 to 1849 (YSPSSTKYSPTSPTYTPT) shows a compositional bias: low complexity. The segment covering 1850–1859 (ARNYSPTSPM) has biased composition (polar residues). Positions 1860-1881 (YSPTAPSHYSPTSPAYSPSSPT) are enriched in low complexity.

The protein belongs to the RNA polymerase beta' chain family. In terms of assembly, component of the RNA polymerase II (Pol II) complex consisting of 12 subunits. In terms of processing, the tandem 7 residues repeats in the C-terminal domain (CTD) can be highly phosphorylated. The phosphorylation activates Pol II. Phosphorylation occurs mainly at residues 'Ser-2' and 'Ser-5' of the heptapeptide repeat. The phosphorylation state is believed to result from the balanced action of site-specific CTD kinases and phosphatase, and a 'CTD code' that specifies the position of Pol II within the transcription cycle has been proposed. Post-translationally, following transcription stress, the elongating form of RNA polymerase II (RNA pol IIo) is polyubiquitinated via 'Lys-63'-linkages on Lys-1260 at DNA damage sites without leading to degradation: ubiquitination promotes RNA pol IIo backtracking to allow access by the transcription-coupled nucleotide excision repair (TC-NER) machinery. Subsequent DEF1-dependent polyubiquitination by the elongin complex via 'Lys-48'-linkages may lead to proteasome-mediated degradation; presumably at stalled RNA pol II where TC-NER has failed, to halt global transcription and enable 'last resort' DNA repair pathways.

The protein resides in the nucleus. The enzyme catalyses RNA(n) + a ribonucleoside 5'-triphosphate = RNA(n+1) + diphosphate. DNA-dependent RNA polymerase catalyzes the transcription of DNA into RNA using the four ribonucleoside triphosphates as substrates. Largest and catalytic component of RNA polymerase II which synthesizes mRNA precursors and many functional non-coding RNAs. Forms the polymerase active center together with the second largest subunit. Pol II is the central component of the basal RNA polymerase II transcription machinery. It is composed of mobile elements that move relative to each other. RPB1 is part of the core element with the central large cleft, the clamp element that moves to open and close the cleft and the jaws that are thought to grab the incoming DNA template. At the start of transcription, a single-stranded DNA template strand of the promoter is positioned within the central active site cleft of Pol II. A bridging helix emanates from RPB1 and crosses the cleft near the catalytic site and is thought to promote translocation of Pol II by acting as a ratchet that moves the RNA-DNA hybrid through the active site by switching from straight to bent conformations at each step of nucleotide addition. During transcription elongation, Pol II moves on the template as the transcript elongates. Elongation is influenced by the phosphorylation status of the C-terminal domain (CTD) of Pol II largest subunit (RPB1), which serves as a platform for assembly of factors that regulate transcription initiation, elongation, termination and mRNA processing. This Drosophila melanogaster (Fruit fly) protein is DNA-directed RNA polymerase II subunit RPB1.